Consider the following 730-residue polypeptide: ABC transporter G family member 20 (730 aa).

One can recognise an ABC transporter domain in the interval Ile-15 to Phe-244. An ATP-binding site is contributed by Gly-47–Thr-54. Residues Val-281–Glu-303 are disordered. A compositionally biased stretch (low complexity) spans Asn-282–Asn-298. Residues Ser-489–Lys-717 form the ABC transmembrane type-2 domain. 5 helical membrane passes run Phe-520 to Ile-540, Phe-572 to Tyr-592, Ile-602 to Val-622, Ile-634 to Leu-654, and Val-692 to Leu-712.

This sequence belongs to the ABC transporter superfamily.

The protein localises to the membrane. This is ABC transporter G family member 20 (abcG20) from Dictyostelium discoideum (Social amoeba).